The following is a 170-amino-acid chain: MSAPQTTGDRAVIKLLSDALKALNLQNLAQTQFQEEVMPATAPSTDPAVPKDAQEADEPSIDALKSKIAGYERMFAFNCQLLGYLMEEIDGGSPDWMKVPCYLFLIIQSSTLTPIATGAIPKGMVKDVISRLPPKYKERCHAADKNEDWQALMLGITDLMDVVSLSLPPS.

Residues 35–57 (EEVMPATAPSTDPAVPKDAQEAD) form a disordered region.

This is an uncharacterized protein from Candida tsukubaensis (Yeast).